Consider the following 198-residue polypeptide: Ribosomal RNA small subunit methyltransferase G (198 aa).

S-adenosyl-L-methionine contacts are provided by residues G74, F79, 123–124, and R136; that span reads IQ.

It belongs to the methyltransferase superfamily. RNA methyltransferase RsmG family.

It localises to the cytoplasm. The catalysed reaction is guanosine(527) in 16S rRNA + S-adenosyl-L-methionine = N(7)-methylguanosine(527) in 16S rRNA + S-adenosyl-L-homocysteine. Functionally, specifically methylates the N7 position of guanine in position 527 of 16S rRNA. The chain is Ribosomal RNA small subunit methyltransferase G from Orientia tsutsugamushi (strain Ikeda) (Rickettsia tsutsugamushi).